Here is a 139-residue protein sequence, read N- to C-terminus: MLAPKKLKHKKFRKVRFSDASARGSGLAFGEYGLKAIGSARLNGRQIESARRVITRIVSKAGKLWINVFPGIPLTRKPTDVRMGGGKGSVDSYIFAISPGRVLFELGGVDREKAKLALCKASAKLPFSTKFVERVSCEL.

This sequence belongs to the universal ribosomal protein uL16 family. As to quaternary structure, part of the 50S ribosomal subunit.

Its function is as follows. Binds 23S rRNA and is also seen to make contacts with the A and possibly P site tRNAs. The polypeptide is Large ribosomal subunit protein uL16 (rplP) (Neorickettsia sennetsu (strain ATCC VR-367 / Miyayama) (Ehrlichia sennetsu)).